The sequence spans 156 residues: ATP synthase subunit b (156 aa).

Residues 11-31 (AIAFFIFVVFCMKYVWPPLMA) traverse the membrane as a helical segment.

It belongs to the ATPase B chain family. In terms of assembly, F-type ATPases have 2 components, F(1) - the catalytic core - and F(0) - the membrane proton channel. F(1) has five subunits: alpha(3), beta(3), gamma(1), delta(1), epsilon(1). F(0) has three main subunits: a(1), b(2) and c(10-14). The alpha and beta chains form an alternating ring which encloses part of the gamma chain. F(1) is attached to F(0) by a central stalk formed by the gamma and epsilon chains, while a peripheral stalk is formed by the delta and b chains.

The protein localises to the cell inner membrane. F(1)F(0) ATP synthase produces ATP from ADP in the presence of a proton or sodium gradient. F-type ATPases consist of two structural domains, F(1) containing the extramembraneous catalytic core and F(0) containing the membrane proton channel, linked together by a central stalk and a peripheral stalk. During catalysis, ATP synthesis in the catalytic domain of F(1) is coupled via a rotary mechanism of the central stalk subunits to proton translocation. Functionally, component of the F(0) channel, it forms part of the peripheral stalk, linking F(1) to F(0). In Aeromonas hydrophila subsp. hydrophila (strain ATCC 7966 / DSM 30187 / BCRC 13018 / CCUG 14551 / JCM 1027 / KCTC 2358 / NCIMB 9240 / NCTC 8049), this protein is ATP synthase subunit b.